The chain runs to 338 residues: tRNA N6-adenosine threonylcarbamoyltransferase (338 aa).

The Fe cation site is built by His111 and His115. Residues 134–138 (LVSGG), Asp167, Gly180, and Asn272 contribute to the substrate site. Residue Asp300 coordinates Fe cation.

It belongs to the KAE1 / TsaD family. It depends on Fe(2+) as a cofactor.

It localises to the cytoplasm. The enzyme catalyses L-threonylcarbamoyladenylate + adenosine(37) in tRNA = N(6)-L-threonylcarbamoyladenosine(37) in tRNA + AMP + H(+). Required for the formation of a threonylcarbamoyl group on adenosine at position 37 (t(6)A37) in tRNAs that read codons beginning with adenine. Is involved in the transfer of the threonylcarbamoyl moiety of threonylcarbamoyl-AMP (TC-AMP) to the N6 group of A37, together with TsaE and TsaB. TsaD likely plays a direct catalytic role in this reaction. The chain is tRNA N6-adenosine threonylcarbamoyltransferase from Shewanella putrefaciens (strain CN-32 / ATCC BAA-453).